The primary structure comprises 121 residues: Small ribosomal subunit protein uS13 (121 aa).

The interval G94–K121 is disordered. A compositionally biased stretch (basic residues) spans K110–K121.

This sequence belongs to the universal ribosomal protein uS13 family. Part of the 30S ribosomal subunit. Forms a loose heterodimer with protein S19. Forms two bridges to the 50S subunit in the 70S ribosome.

Its function is as follows. Located at the top of the head of the 30S subunit, it contacts several helices of the 16S rRNA. In the 70S ribosome it contacts the 23S rRNA (bridge B1a) and protein L5 of the 50S subunit (bridge B1b), connecting the 2 subunits; these bridges are implicated in subunit movement. Contacts the tRNAs in the A and P-sites. This Mesoplasma florum (strain ATCC 33453 / NBRC 100688 / NCTC 11704 / L1) (Acholeplasma florum) protein is Small ribosomal subunit protein uS13.